Here is a 101-residue protein sequence, read N- to C-terminus: MAKQSMKAREVKRVALADKYFAKRAELKAIISDVNASDEERWNAVLKLQTLPRDSSPSRQRNRCRQTGRPHGFLRKFGLSRIKVREAAMRGEIPGLKKASW.

This sequence belongs to the universal ribosomal protein uS14 family. As to quaternary structure, part of the 30S ribosomal subunit. Contacts proteins S3 and S10.

Its function is as follows. Binds 16S rRNA, required for the assembly of 30S particles and may also be responsible for determining the conformation of the 16S rRNA at the A site. The chain is Small ribosomal subunit protein uS14 from Escherichia coli O8 (strain IAI1).